Consider the following 132-residue polypeptide: Replication enhancer protein (132 aa).

Belongs to the geminiviridae replication enhancer protein family. In terms of assembly, homooligomer. Interacts with the replication-associated protein (REP). Interacts with host proliferating cell nuclear antigen (PCNA). Interacts with host retinoblastoma-related protein 1 (RBR1), and may thereby deregulate the host cell cycle. Oligomerization and interaction with PCNA are necessary for optimal replication enhancement.

In terms of biological role, increases viral DNA accumulation. Enhances infectivity and symptom expression. The protein is Replication enhancer protein of Pepper huasteco yellow vein virus (PHYVV).